The chain runs to 267 residues: Large ribosomal subunit protein uL3 (267 aa).

The interval 124–147 (NQHIGPKSHGGGGGSQPVRQTGSL) is disordered.

This sequence belongs to the universal ribosomal protein uL3 family. As to quaternary structure, part of the 50S ribosomal subunit. Forms a cluster with proteins L14 and L19.

One of the primary rRNA binding proteins, it binds directly near the 3'-end of the 23S rRNA, where it nucleates assembly of the 50S subunit. The chain is Large ribosomal subunit protein uL3 from Mycoplasmopsis agalactiae (strain NCTC 10123 / CIP 59.7 / PG2) (Mycoplasma agalactiae).